The chain runs to 357 residues: Probable dual-specificity RNA methyltransferase RlmN (357 aa).

Catalysis depends on Glu-95, which acts as the Proton acceptor. Residues 106–340 (NRDRHTVCVS…VSVREEKGTD (235 aa)) form the Radical SAM core domain. Residues Cys-113 and Cys-345 are joined by a disulfide bond. Cys-120, Cys-124, and Cys-127 together coordinate [4Fe-4S] cluster. Residues 172–173 (GE), Ser-204, 227–229 (SLH), and Asn-302 each bind S-adenosyl-L-methionine. Catalysis depends on Cys-345, which acts as the S-methylcysteine intermediate.

The protein belongs to the radical SAM superfamily. RlmN family. Requires [4Fe-4S] cluster as cofactor.

The protein resides in the cytoplasm. The catalysed reaction is adenosine(2503) in 23S rRNA + 2 reduced [2Fe-2S]-[ferredoxin] + 2 S-adenosyl-L-methionine = 2-methyladenosine(2503) in 23S rRNA + 5'-deoxyadenosine + L-methionine + 2 oxidized [2Fe-2S]-[ferredoxin] + S-adenosyl-L-homocysteine. It carries out the reaction adenosine(37) in tRNA + 2 reduced [2Fe-2S]-[ferredoxin] + 2 S-adenosyl-L-methionine = 2-methyladenosine(37) in tRNA + 5'-deoxyadenosine + L-methionine + 2 oxidized [2Fe-2S]-[ferredoxin] + S-adenosyl-L-homocysteine. Specifically methylates position 2 of adenine 2503 in 23S rRNA and position 2 of adenine 37 in tRNAs. The protein is Probable dual-specificity RNA methyltransferase RlmN of Desulfitobacterium hafniense (strain DSM 10664 / DCB-2).